A 319-amino-acid chain; its full sequence is Curved DNA-binding protein (319 aa).

A J domain is found at aspartate 5–arginine 69.

Its subcellular location is the cytoplasm. The protein resides in the nucleoid. Functionally, DNA-binding protein that preferentially recognizes a curved DNA sequence. It is probably a functional analog of DnaJ; displays overlapping activities with DnaJ, but functions under different conditions, probably acting as a molecular chaperone in an adaptive response to environmental stresses other than heat shock. Lacks autonomous chaperone activity; binds native substrates and targets them for recognition by DnaK. Its activity is inhibited by the binding of CbpM. This chain is Curved DNA-binding protein, found in Pseudomonas putida (strain ATCC 47054 / DSM 6125 / CFBP 8728 / NCIMB 11950 / KT2440).